Consider the following 434-residue polypeptide: Beta-enolase (434 aa).

S2 carries the post-translational modification N-acetylserine. Substrate-binding residues include H158 and E167. Residue E210 is the Proton donor of the active site. D245, E293, and D318 together coordinate Mg(2+). Residues E293 and D318 each coordinate substrate. K343 serves as the catalytic Proton acceptor. Residues 370 to 373 (SHRS) and K394 contribute to the substrate site.

It belongs to the enolase family. Homodimer. Interacts with PNKD. Requires Mg(2+) as cofactor.

The protein resides in the cytoplasm. It catalyses the reaction (2R)-2-phosphoglycerate = phosphoenolpyruvate + H2O. It functions in the pathway carbohydrate degradation; glycolysis; pyruvate from D-glyceraldehyde 3-phosphate: step 4/5. Functionally, glycolytic enzyme that catalyzes the conversion of 2-phosphoglycerate to phosphoenolpyruvate. This chain is Beta-enolase (ENO3), found in Gallus gallus (Chicken).